We begin with the raw amino-acid sequence, 277 residues long: Caspase-6 (277 aa).

Positions 1 to 5 (MTETD) are excised as a propeptide. Residues 25–27 (KRR) form a tri-arginine exosite region. Ser62 carries the post-translational modification Phosphoserine. Residue His104 is part of the active site. The segment at 108-125 (NHIYAYDAKIEIQTLTGL) is 130's region. The active site involves Cys146. A propeptide spanning residues 163–176 (HQTDKLDDNVTQVD) is cleaved from the precursor. Ser240 carries the phosphoserine modification. Residues Cys247 and Cys260 are each lipidated (S-palmitoyl cysteine).

It belongs to the peptidase C14A family. As to quaternary structure, heterotetramer that consists of two anti-parallel arranged heterodimers, each one formed by a 18 kDa (p18) and a 11 kDa (p11) subunits. Interacts with BIRC6/bruce. Interacts with RIPK3. Heterotetramer that consists of two anti-parallel arranged heterodimers, each one formed by a 18 kDa (Caspase-6 subunit p18) and a 11 kDa (Caspase-6 subunit p11) subunit. Phosphorylated by NUAK1; phosphorylation inhibits self-activation. Phosphorylation at Ser-240 by AMP-activated protein kinase (PRKAA1 or PRKAA2) inhibits autocleavage, preventing caspase activation, thereby preventing hepatocyte apoptosis. Post-translationally, palmitoylation by ZDHHC17 blocks dimerization and subsequent activation, leading to inhibit the cysteine protease activity. In terms of processing, can be cleaved and activated by different caspases, depending on the context. Cleaved and activated by caspase-8 (CASP8) and subsequently by caspase-3 (CASP3). Can also undergo autoactivation by mediating autocleavage at Asp-162 and Asp-176, while it is not able to cleave its N-terminal disordered prodomain. Cleaved and activated by CASP1, possibly in the context of inflammation.

It is found in the cytoplasm. Its subcellular location is the nucleus. It carries out the reaction Strict requirement for Asp at position P1 and has a preferred cleavage sequence of Val-Glu-His-Asp-|-.. During activation, the N-terminal disordered prodomain is removed by cleavage. Concomitantly, double cleavage gives rise to a large 18-kDa and a small 11-kDa subunit. The two large and two small subunits then assemble to form the active CASP6 complex. Can be cleaved and activated by different caspases, depending on the context. Cleaved and activated by caspase-8 (CASP8) and subsequently by caspase-3 (CASP3). Can also undergo autoactivation by mediating autocleavage at Asp-162 and Asp-176, while it is not able to cleave its N-terminal disordered prodomain. Intramolecular cleavage at Asp-176 is a prerequisite for CASP6 self-activation. Cleaved and activated by CASP1 in neurons, possibly in the context of inflammation. Phosphorylation at Ser-240 inhibits autocleavage, preventing caspase activation. Its function is as follows. Cysteine protease that plays essential roles in programmed cell death, axonal degeneration, development and innate immunity. Acts as a non-canonical executioner caspase during apoptosis: localizes in the nucleus and cleaves the nuclear structural protein NUMA1 and lamin A/LMNA thereby inducing nuclear shrinkage and fragmentation. Lamin-A/LMNA cleavage is required for chromatin condensation and nuclear disassembly during apoptotic execution. Acts as a regulator of liver damage by promoting hepatocyte apoptosis: in absence of phosphorylation by AMP-activated protein kinase (AMPK), catalyzes cleavage of BID, leading to cytochrome c release, thereby participating in nonalcoholic steatohepatitis. Cleaves PARK7/DJ-1 in cells undergoing apoptosis. Involved in intrinsic apoptosis by mediating cleavage of RIPK1. Furthermore, cleaves many transcription factors such as NF-kappa-B and cAMP response element-binding protein/CREBBP. Cleaves phospholipid scramblase proteins XKR4 and XKR9. In addition to apoptosis, involved in different forms of programmed cell death. Plays an essential role in defense against viruses by acting as a central mediator of the ZBP1-mediated pyroptosis, apoptosis, and necroptosis (PANoptosis), independently of its cysteine protease activity. PANoptosis is a unique inflammatory programmed cell death, which provides a molecular scaffold that allows the interactions and activation of machinery required for inflammasome/pyroptosis, apoptosis and necroptosis. Mechanistically, interacts with RIPK3 and enhances the interaction between RIPK3 and ZBP1, leading to ZBP1-mediated inflammasome activation and cell death. Plays an essential role in axon degeneration during axon pruning which is the remodeling of axons during neurogenesis but not apoptosis. Regulates B-cell programs both during early development and after antigen stimulation. This is Caspase-6 from Rattus norvegicus (Rat).